A 522-amino-acid chain; its full sequence is U4/U6 small nuclear ribonucleoprotein Prp4 (522 aa).

A compositionally biased stretch (polar residues) spans 1–13; sequence MASSRASSTQATK. A disordered region spans residues 1–20; the sequence is MASSRASSTQATKTKAPDDL. K27 is subject to N6-acetyllysine. 7 WD repeats span residues 229-268, 271-318, 321-360, 363-402, 405-444, 447-487, and 490-521; these read GDDRPISYCHFSPNSKMLATACWSGLCKLWSVPDCNLLHT, GHNT…PVAD, GHTVRVARVMWHPSGRFLGTTCYDRSWRLWDLEAQEEILH, GHSMGVYDIAFHQDGSLAGTGGLDAFGRVWDLRTGRCIMF, GHLKEIYGINFSPNGYHIATGSGDNTCKVWDLRQRRCVYT, AHQN…PLKT, and GHEGKVMGLDISSDGQLIATCSYDRTFKLWMA.

Component of the precatalytic spliceosome (spliceosome B complex). Component of the U4/U6-U5 tri-snRNP complex, a building block of the precatalytic spliceosome (spliceosome B complex). The U4/U6-U5 tri-snRNP complex is composed of the U4, U6 and U5 snRNAs and at least PRPF3, PRPF4, PRPF6, PRPF8, PRPF31, SNRNP200, TXNL4A, SNRNP40, SNRPB, SNRPD1, SNRPD2, SNRPD3, SNRPE, SNRPF, SNRPG, DDX23, CD2BP2, PPIH, SNU13, EFTUD2, SART1 and USP39, plus LSM2, LSM3, LSM4, LSM5, LSM6, LSM7 and LSM8. Interacts directly with PRPF18, PPIH and PRPF3. Part of a heteromeric complex containing PPIH, PRPF3 and PRPF4 that is stable in the absence of RNA. Interacts with ERCC6.

The protein localises to the nucleus. It is found in the nucleus speckle. Plays a role in pre-mRNA splicing as component of the U4/U6-U5 tri-snRNP complex that is involved in spliceosome assembly, and as component of the precatalytic spliceosome (spliceosome B complex). This chain is U4/U6 small nuclear ribonucleoprotein Prp4 (PRPF4), found in Homo sapiens (Human).